The following is a 271-amino-acid chain: MPRPLKMSYGDQKPPYSYISLTAMAIIHSPQRLLPLSEIYRFIMDQFPFYRKNTQKWQNSLRHNLSFNDCFIKVPRNVTKAGKGSYWTLHPMAFDMFENGSLLRRRKRFRVKQLEKDISNWKLAAAANTEMVTHYLDDQLTQMAFADPARHGHVLANASAAQMSPYKATPPILPTTVTQLPARPKRAFTIESLMAPDPASTPNEGLVPMEYGSPDAVALEKPPFNLPFNFNELAAQYQLYFPSFFYNGQYGNIPCYQKTPPLFHNGPLPVF.

Positions 12–103 (QKPPYSYISL…FDMFENGSLL (92 aa)) form a DNA-binding region, fork-head.

Expressed in early embryogenesis in 14 symmetrical pairs of segmentally arranged neuroblasts and in developing peripheral nervous system. Also, later in embryogenesis, in a cluster of cells in head region.

It localises to the nucleus. Functionally, involved in development during embryogenesis. This Drosophila melanogaster (Fruit fly) protein is Fork head domain-containing protein FD5 (fd96Cb).